Here is a 384-residue protein sequence, read N- to C-terminus: 8-amino-7-oxononanoate synthase (384 aa).

Residue R21 participates in substrate binding. 108–109 (GF) lines the pyridoxal 5'-phosphate pocket. H133 provides a ligand contact to substrate. Residues S179, H207, and T233 each coordinate pyridoxal 5'-phosphate. Position 236 is an N6-(pyridoxal phosphate)lysine (K236). T352 is a substrate binding site.

It belongs to the class-II pyridoxal-phosphate-dependent aminotransferase family. BioF subfamily. As to quaternary structure, homodimer. Requires pyridoxal 5'-phosphate as cofactor.

It carries out the reaction 6-carboxyhexanoyl-[ACP] + L-alanine + H(+) = (8S)-8-amino-7-oxononanoate + holo-[ACP] + CO2. It participates in cofactor biosynthesis; biotin biosynthesis. In terms of biological role, catalyzes the decarboxylative condensation of pimeloyl-[acyl-carrier protein] and L-alanine to produce 8-amino-7-oxononanoate (AON), [acyl-carrier protein], and carbon dioxide. This is 8-amino-7-oxononanoate synthase from Citrobacter koseri (strain ATCC BAA-895 / CDC 4225-83 / SGSC4696).